An 861-amino-acid polypeptide reads, in one-letter code: Actin-binding LIM protein 1 (861 aa).

LIM zinc-binding domains lie at 97–156 (IHCH…MYGT), 156–216 (TRCH…MSSS), 224–283 (SNCA…LFGV), and 283–343 (VKCE…TKTE). Ser-216 is modified (phosphoserine). The segment at 374-414 (LQLLSPPCLTNSNKNPRQPTRTSSESIYSRPGSSIPGSPGH) is disordered. Over residues 381-400 (CLTNSNKNPRQPTRTSSESI) the composition is skewed to polar residues. The segment covering 404–413 (PGSSIPGSPG) has biased composition (low complexity). Ser-411 bears the Phosphoserine mark. Tyr-417 and Tyr-440 each carry phosphotyrosine. Disordered stretches follow at residues 459 to 590 (EDKQ…PTYA) and 634 to 682 (FPAA…ELLR). 3 positions are modified to phosphoserine: Ser-466, Ser-470, and Ser-475. Positions 467–478 (LGESPRTLSPTP) are enriched in polar residues. Residue Thr-477 is modified to Phosphothreonine. At Ser-479 the chain carries Phosphoserine. A Phosphotyrosine modification is found at Tyr-483. The segment covering 493–518 (RSTSQGSINSPVYSRHSYTPTTSRSP) has biased composition (polar residues). Ser-496, Ser-499, and Ser-502 each carry phosphoserine. Positions 536-546 (PLRTSSFSSTH) are enriched in low complexity. 2 positions are modified to phosphoserine: Ser-582 and Ser-671. The stretch at 673–723 (REEDEEELLRRRQLQEEQLMKLNSGLGQLILKEEMEKESRERASLASRYDS) forms a coiled coil. Lys-704 participates in a covalent cross-link: Glycyl lysine isopeptide (Lys-Gly) (interchain with G-Cter in SUMO2). The tract at residues 713-748 (ERASLASRYDSPLHSASHAPSSKTSSLPGYGKNGLH) is disordered. A phosphoserine mark is found at Ser-723, Ser-738, Ser-760, and Ser-789. The span at 724 to 738 (PLHSASHAPSSKTSS) shows a compositional bias: low complexity. The HP domain occupies 793-861 (MLEPKIFPYE…NDMKKKAKLF (69 aa)).

Binds F-actin. Interacts with ABRA. As to expression, isoform 1 is detected in adult retina, where it is highly expressed in the ganglion layer. Detected in rod inner segment. Isoform 2 is highly expressed in adult retina, brain, kidney and heart. Isoform 3 is highly expressed in adult retina, brain, kidney, liver, skeletal muscle, spleen and heart. Detected in embryonic retina, brain, spinal cord, peripheral sensory ganglia and thymus.

The protein resides in the cytoplasm. It localises to the cytoskeleton. In terms of biological role, may act as scaffold protein. May play a role in the development of the retina. Has been suggested to play a role in axon guidance. This is Actin-binding LIM protein 1 (Ablim1) from Mus musculus (Mouse).